A 242-amino-acid polypeptide reads, in one-letter code: MTLDKLIEKLAAKSSILITPITVKDYLAYKIEPNFLLPFLKALKESEELRFTLLTDLFGADFPQNNVVNSVGLGHKEQGAKPITNRRTTSDNVGESKSIDYKRFEVVYNLLSLKLNKRLIIKVYISEKETIPSAMNIFSAACWYEREVYDMYGVNFEGNDDKRRILTDYEFEGHPLRKDFPLTGYTQVKYDEKLKKVAYEPVDLDIEYREFDFSSHWHSPSYVLPGDEKATDVIPAKAGIQK.

An insert region spans residues V67–Y101.

This sequence belongs to the complex I 30 kDa subunit family. NDH-1 is composed of 14 different subunits. Subunits NuoB, C, D, E, F, and G constitute the peripheral sector of the complex.

Its subcellular location is the cell inner membrane. The catalysed reaction is a quinone + NADH + 5 H(+)(in) = a quinol + NAD(+) + 4 H(+)(out). Functionally, NDH-1 shuttles electrons from NADH, via FMN and iron-sulfur (Fe-S) centers, to quinones in the respiratory chain. The immediate electron acceptor for the enzyme in this species is believed to be ubiquinone. Couples the redox reaction to proton translocation (for every two electrons transferred, four hydrogen ions are translocated across the cytoplasmic membrane), and thus conserves the redox energy in a proton gradient. This is NADH-quinone oxidoreductase subunit C from Rickettsia conorii (strain ATCC VR-613 / Malish 7).